Consider the following 122-residue polypeptide: Basic phospholipase A2 PLA-B (122 aa).

7 disulfide bridges follow: C26/C115, C28/C44, C43/C95, C49/C122, C50/C88, C57/C81, and C75/C86. Ca(2+) contacts are provided by Y27, G29, and G31. H47 is a catalytic residue. Residue D48 participates in Ca(2+) binding. D89 is an active-site residue.

This sequence belongs to the phospholipase A2 family. Group II subfamily. D49 sub-subfamily. Ca(2+) is required as a cofactor. Expressed by the venom gland.

The protein localises to the secreted. It catalyses the reaction a 1,2-diacyl-sn-glycero-3-phosphocholine + H2O = a 1-acyl-sn-glycero-3-phosphocholine + a fatty acid + H(+). In terms of biological role, snake venom phospholipase A2 (PLA2) that displays edema-inducing activities. PLA-B is three times more active than PLA-A in edema-inducing activities. PLA2 catalyzes the calcium-dependent hydrolysis of the 2-acyl groups in 3-sn-phosphoglycerides. In Protobothrops flavoviridis (Habu), this protein is Basic phospholipase A2 PLA-B.